Reading from the N-terminus, the 451-residue chain is Probable DNA polymerase delta small subunit (451 aa).

The protein belongs to the DNA polymerase delta/II small subunit family. Heterodimer with subunits of 125 kDa and 50 kDa.

It localises to the nucleus. The catalysed reaction is DNA(n) + a 2'-deoxyribonucleoside 5'-triphosphate = DNA(n+1) + diphosphate. In terms of biological role, the function of the small subunit is not yet clear. The chain is Probable DNA polymerase delta small subunit from Caenorhabditis elegans.